A 280-amino-acid polypeptide reads, in one-letter code: Suppressor of disruption of TFIIS (280 aa).

It belongs to the SSM1 family.

Its function is as follows. Could be an enzyme that inactivates 6-azauracil by modifying it. In Saccharomyces cerevisiae (strain ATCC 204508 / S288c) (Baker's yeast), this protein is Suppressor of disruption of TFIIS (SDT1).